A 379-amino-acid chain; its full sequence is Putative zinc metalloprotease BR1156/BS1330_I1152 (379 aa).

Residue His33 coordinates Zn(2+). Residue Glu34 is part of the active site. His37 contacts Zn(2+). 4 helical membrane-spanning segments follow: residues 39–61 (LVAR…ELLG), 122–144 (VFAG…FALY), 305–327 (FDWL…LFPL), and 355–377 (IFYR…NDLF). Residues 133 to 208 (TIAIFSVFFA…LNFTVERDGK (76 aa)) enclose the PDZ domain.

This sequence belongs to the peptidase M50B family. Zn(2+) serves as cofactor.

It localises to the cell inner membrane. The sequence is that of Putative zinc metalloprotease BR1156/BS1330_I1152 from Brucella suis biovar 1 (strain 1330).